The following is a 353-amino-acid chain: Putative actin-28 (353 aa).

It belongs to the actin family.

Its subcellular location is the cytoplasm. It is found in the cytoskeleton. It carries out the reaction ATP + H2O = ADP + phosphate + H(+). Its function is as follows. Actins are highly conserved proteins that are involved in various types of cell motility and are ubiquitously expressed in all eukaryotic cells. Multiple isoforms are involved in various cellular functions such as cytoskeleton structure, cell mobility, chromosome movement and muscle contraction. This chain is Putative actin-28 (act28), found in Dictyostelium discoideum (Social amoeba).